Reading from the N-terminus, the 213-residue chain is Peptide methionine sulfoxide reductase MsrA (213 aa).

The active site involves cysteine 52.

It belongs to the MsrA Met sulfoxide reductase family.

It carries out the reaction L-methionyl-[protein] + [thioredoxin]-disulfide + H2O = L-methionyl-(S)-S-oxide-[protein] + [thioredoxin]-dithiol. The catalysed reaction is [thioredoxin]-disulfide + L-methionine + H2O = L-methionine (S)-S-oxide + [thioredoxin]-dithiol. Its function is as follows. Has an important function as a repair enzyme for proteins that have been inactivated by oxidation. Catalyzes the reversible oxidation-reduction of methionine sulfoxide in proteins to methionine. The chain is Peptide methionine sulfoxide reductase MsrA from Enterobacter sp. (strain 638).